Reading from the N-terminus, the 392-residue chain is Chorismate synthase (392 aa).

Residues R40 and R46 each coordinate NADP(+). Residues 135–137 (RAS), 256–257 (QA), G300, 315–319 (KPIST), and R341 contribute to the FMN site.

The protein belongs to the chorismate synthase family. Homotetramer. Requires FMNH2 as cofactor.

The catalysed reaction is 5-O-(1-carboxyvinyl)-3-phosphoshikimate = chorismate + phosphate. It participates in metabolic intermediate biosynthesis; chorismate biosynthesis; chorismate from D-erythrose 4-phosphate and phosphoenolpyruvate: step 7/7. In terms of biological role, catalyzes the anti-1,4-elimination of the C-3 phosphate and the C-6 proR hydrogen from 5-enolpyruvylshikimate-3-phosphate (EPSP) to yield chorismate, which is the branch point compound that serves as the starting substrate for the three terminal pathways of aromatic amino acid biosynthesis. This reaction introduces a second double bond into the aromatic ring system. In Acidothermus cellulolyticus (strain ATCC 43068 / DSM 8971 / 11B), this protein is Chorismate synthase.